The sequence spans 744 residues: Prestin (744 aa).

Residues 1–79 lie on the Cytoplasmic side of the membrane; that stretch reads MDHAEENEIP…WLPAYKFKEY (79 aa). Residues 80–105 form a helical membrane-spanning segment; it reads VLGDLVSGISTGVLQLPQGLAFAMLA. The Extracellular portion of the chain corresponds to 106-109; it reads AVPP. A helical membrane pass occupies residues 110 to 125; the sequence is VFGLYSSFYPVIMYCF. Over 126–137 the chain is Cytoplasmic; sequence FGTSRHISIGPF. A helical transmembrane segment spans residues 138-147; that stretch reads AVISLMIGGV. At 148–178 the chain is on the extracellular side; it reads AVRLVPDDIVIPGGVNATNGTEARDALRVKV. Positions 158–168 match the Involved in motor function motif; that stretch reads IPGGVNATNGT. N-linked (GlcNAc...) asparagine glycosylation is found at Asn-163 and Asn-166. The chain crosses the membrane as a helical span at residues 179–196; sequence AMSVTLLSGIIQFCLGVC. Residues 197–208 are Cytoplasmic-facing; it reads RFGFVAIYLTEP. A helical membrane pass occupies residues 209 to 230; it reads LVRGFTTAAAVHVFTSMLKYLF. At 231–243 the chain is on the extracellular side; sequence GVKTKRYSGIFSV. Positions 244–252 form an intramembrane region, helical; sequence VYSTVAVLQ. Residues 253 to 258 are Extracellular-facing; that stretch reads NVKNLN. The chain crosses the membrane as a helical span at residues 259 to 282; the sequence is VCSLGVGLMVFGLLLGGKEFNERF. At 283-291 the chain is on the cytoplasmic side; the sequence is KEKLPAPIP. The chain crosses the membrane as a helical span at residues 292–304; sequence LEFFAVVMGTGIS. At 305 to 337 the chain is on the extracellular side; that stretch reads AGFNLHESYSVDVVGTLPLGLLPPANPDTSLFH. A helical membrane pass occupies residues 338–361; sequence LVYVDAIAIAIVGFSVTISMAKTL. The Cytoplasmic portion of the chain corresponds to 362–370; the sequence is ANKHGYQVD. A helical membrane pass occupies residues 371–388; sequence GNQELIALGICNSIGSLF. Over 389–396 the chain is Extracellular; sequence QTFSISCS. Residues 397-406 form a helical membrane-spanning segment; sequence LSRSLVQEGT. Ser-398 lines the salicylate pocket. Topologically, residues 407–410 are cytoplasmic; sequence GGKT. A helical membrane pass occupies residues 411 to 429; it reads QLAGCLASLMILLVILATG. At 430–436 the chain is on the extracellular side; sequence FLFESLP. Residues 437–455 form a helical membrane-spanning segment; that stretch reads QAVLSAIVIVNLKGMFMQF. Residues 456–469 lie on the Cytoplasmic side of the membrane; sequence SDLPFFWRTSKIEL. Residues 470 to 484 traverse the membrane as a helical segment; the sequence is TIWLTTFVSSLFLGL. Residue Asp-485 is a topological domain, extracellular. Residues 486–497 traverse the membrane as a helical segment; sequence YGLITAVIIALL. Residues 498-744 are Cytoplasmic-facing; the sequence is TVIYRTQSPS…PNATPTTPEA (247 aa). The interval 505–718 is extended region for STAS domain; the sequence is SPSYKVLGQL…AVLGSHVREA (214 aa). Residues 525–713 enclose the STAS domain; sequence AYEEVKEIPG…HSIHDAVLGS (189 aa). Positions 717–744 are disordered; sequence EAMAEQEASAPPPQDDMEPNATPTTPEA.

Belongs to the SLC26A/SulP transporter (TC 2.A.53) family. As to quaternary structure, homodimer. Interacts (via STAS domain) with CALM; this interaction is calcium-dependent and the STAS domain interacts with only one lobe of CALM which is an elongated conformation. Interacts with MYH1. In terms of tissue distribution, highly expressed in mature outer hair cells, but not in inner hair cells or other cells of the basilar membrane and the organ of Corti.

Its subcellular location is the lateral cell membrane. The catalysed reaction is 2 hydrogencarbonate(in) + chloride(out) = 2 hydrogencarbonate(out) + chloride(in). Its function is as follows. Voltage-sensitive motor protein that drives outer hair cell (OHC) electromotility (eM) and participates in sound amplification in the hearing organ. Converts changes in the transmembrane electric potential into mechanical displacements resulting in the coupling of its expansion to movement of a charged voltage sensor across the lipid membrane. The nature of the voltage sensor is not completely clear, and two models compete. In the first model, acts as an incomplete transporter where intracellular chloride anion acts as extrinsic voltage sensor that drives conformational change in the protein which is sufficient to produce a length change in the plane of the membrane and hence in the length of the OHC. The second model in which multiple charged amino acid residues are distributed at the intracellular and extracellular membrane interfaces that form an intrinsic voltage sensor, whose movement produces the non-linear capacitance (NLC). However, the effective voltage sensor may be the result of a hybrid voltage sensor assembled from intrinsic charge (charged residues) and extrinsic charge (bound anion). Notably, binding of anions to the anion-binding pocket partially neutralizes the intrinsic positive charge rather than to form an electrically negative sensor, therefore remaining charge may serve as voltage sensor that, after depolarization, moves from down (expanded state) to up (contracted) conformation, which is accompanied by an eccentric contraction of the intermembrane cross-sectional area of the protein as well as a major increase in the hydrophobic thickness of the protein having as consequences the plasma membrane thickening and the cell contraction after membrane depolarization. The anion-binding pocket transits from the inward-open (Down) state, where it is exposed toward the intracellular solvent in the absence of anion, to the occluded (Up) state upon anion binding. Salicylate competes for the anion-binding site and inhibits the voltage-sensor movement, and therefore inhibits the charge transfer and electromotility by displacing Cl(-) from the anion-binding site and by preventing the structural transitions to the contracted state. In addition, can act as a weak Cl(-)/HCO3 (-) antiporter across the cell membrane and so regulate the intracellular pH of the outer hair cells (OHCs), while firstly found as being unable to mediate electrogenic anion transport. Moreover, supports a role in cardiac mechanical amplification serving as an elastic element to enhance the actomyosin- based sarcomere contraction system. This chain is Prestin, found in Meriones unguiculatus (Mongolian jird).